The following is a 459-amino-acid chain: Cysteine--tRNA ligase (459 aa).

Position 28 (cysteine 28) interacts with Zn(2+). Residues valine 30–histidine 40 carry the 'HIGH' region motif. The Zn(2+) site is built by cysteine 209, histidine 234, and glutamate 238. Residues lysine 266–serine 270 carry the 'KMSKS' region motif. An ATP-binding site is contributed by lysine 269.

The protein belongs to the class-I aminoacyl-tRNA synthetase family. In terms of assembly, monomer. It depends on Zn(2+) as a cofactor.

Its subcellular location is the cytoplasm. It catalyses the reaction tRNA(Cys) + L-cysteine + ATP = L-cysteinyl-tRNA(Cys) + AMP + diphosphate. The chain is Cysteine--tRNA ligase from Actinobacillus succinogenes (strain ATCC 55618 / DSM 22257 / CCUG 43843 / 130Z).